The primary structure comprises 291 residues: Bifunctional protein FolD (291 aa).

NADP(+)-binding positions include 168-170 (GRG), T195, and I236.

It belongs to the tetrahydrofolate dehydrogenase/cyclohydrolase family. In terms of assembly, homodimer.

The enzyme catalyses (6R)-5,10-methylene-5,6,7,8-tetrahydrofolate + NADP(+) = (6R)-5,10-methenyltetrahydrofolate + NADPH. It catalyses the reaction (6R)-5,10-methenyltetrahydrofolate + H2O = (6R)-10-formyltetrahydrofolate + H(+). It functions in the pathway one-carbon metabolism; tetrahydrofolate interconversion. Functionally, catalyzes the oxidation of 5,10-methylenetetrahydrofolate to 5,10-methenyltetrahydrofolate and then the hydrolysis of 5,10-methenyltetrahydrofolate to 10-formyltetrahydrofolate. This chain is Bifunctional protein FolD, found in Bifidobacterium longum subsp. infantis (strain ATCC 15697 / DSM 20088 / JCM 1222 / NCTC 11817 / S12).